The primary structure comprises 943 residues: Glycine dehydrogenase (decarboxylating) (943 aa).

The residue at position 695 (lysine 695) is an N6-(pyridoxal phosphate)lysine.

The protein belongs to the GcvP family. As to quaternary structure, the glycine cleavage system is composed of four proteins: P, T, L and H. Pyridoxal 5'-phosphate is required as a cofactor.

The catalysed reaction is N(6)-[(R)-lipoyl]-L-lysyl-[glycine-cleavage complex H protein] + glycine + H(+) = N(6)-[(R)-S(8)-aminomethyldihydrolipoyl]-L-lysyl-[glycine-cleavage complex H protein] + CO2. In terms of biological role, the glycine cleavage system catalyzes the degradation of glycine. The P protein binds the alpha-amino group of glycine through its pyridoxal phosphate cofactor; CO(2) is released and the remaining methylamine moiety is then transferred to the lipoamide cofactor of the H protein. The chain is Glycine dehydrogenase (decarboxylating) from Jannaschia sp. (strain CCS1).